We begin with the raw amino-acid sequence, 230 residues long: Large ribosomal subunit protein uL1 (230 aa).

The protein belongs to the universal ribosomal protein uL1 family. Part of the 50S ribosomal subunit.

Binds directly to 23S rRNA. The L1 stalk is quite mobile in the ribosome, and is involved in E site tRNA release. In terms of biological role, protein L1 is also a translational repressor protein, it controls the translation of the L11 operon by binding to its mRNA. The sequence is that of Large ribosomal subunit protein uL1 from Bacillus mycoides (strain KBAB4) (Bacillus weihenstephanensis).